A 406-amino-acid polypeptide reads, in one-letter code: Serine/threonine transporter SstT (406 aa).

9 helical membrane passes run 15-35 (LVLQ…VSPS), 47-67 (FVGA…AASI), 81-101 (IIAM…VLSF), 140-160 (ALMS…GLAL), 191-211 (FGIF…ALAG), 215-235 (LLVV…PAMV), 289-309 (IPLG…TLTL), 315-335 (MGIE…AVSA), and 362-382 (IAMQ…SAET).

This sequence belongs to the dicarboxylate/amino acid:cation symporter (DAACS) (TC 2.A.23) family.

The protein resides in the cell inner membrane. It carries out the reaction L-serine(in) + Na(+)(in) = L-serine(out) + Na(+)(out). It catalyses the reaction L-threonine(in) + Na(+)(in) = L-threonine(out) + Na(+)(out). Involved in the import of serine and threonine into the cell, with the concomitant import of sodium (symport system). This is Serine/threonine transporter SstT from Vibrio vulnificus (strain CMCP6).